We begin with the raw amino-acid sequence, 265 residues long: Short-chain dehydrogenase/reductase fsr5 (265 aa).

The N-terminal stretch at 1-32 (MASLGKYVSKLAGSRVLVIGGSSGIGFGVAEA) is a signal peptide. NADP(+) is bound by residues S22, S23, I25, S45, and K50. N-linked (GlcNAc...) asparagine glycosylation occurs at N62. Residues N88, R130, and T204 each coordinate NADP(+). Residues N218 and N250 are each glycosylated (N-linked (GlcNAc...) asparagine).

It belongs to the short-chain dehydrogenases/reductases (SDR) family.

Short-chain dehydrogenase/reductase; part of the gene cluster that mediates the biosynthesis of fusarubins, highly pigmented naphthoquinones responsible for the coloration of the fruiting bodies. The non-reducing polyketide synthase FSR1 is responsible for the condensation of seven acetyl-CoA units to yield a haptaketide. After rings A and B are formed by aldol-type cyclization, the PKS-derived product is released as 6-O-demethylfusarubinaldehyde. Then, two hydroxyl groups at C-5 and C-10 are incorporated by FSR3, and simultaneously hydroxyl groups at C-6 and C-8 are methylated by FSR2. The aldehyde is, on the one hand, reduced by FSR3 to 8-O-methylfusarubin alcohol, which equilibrates mainly with 8-O-methylfusarubin and only small amounts of 8-O-methylnectriafurone. On the other hand, the aldehyde can be oxidized to form 8-O-methylfusarubinic acid, a reaction driven by FSR3 equilibrating with 8-O-methylfusarubinlactone, finally resulting in 8-O-methylanhydrofusarubinlactol after a further reduction step and loss of water. 8-O-Methylfusarubinic acid can also undergo decarboxylation, resulting in 8-O-methyl-13-hydroxynorjavanicin after another hydroxylation step at C-13. Both steps are most likely also accomplished by FSR3. No enzymatic function has been determined so far for either FSR4 and FSR5. Their deletion does not alter the product spectrum, but the possibility that they catalyze specific enzymatic steps during perithecium development cannot be ruled out. FSR4 might possess a regulatory function in the biosynthesis of fusarubins. In Gibberella fujikuroi (strain CBS 195.34 / IMI 58289 / NRRL A-6831) (Bakanae and foot rot disease fungus), this protein is Short-chain dehydrogenase/reductase fsr5.